We begin with the raw amino-acid sequence, 181 residues long: Mating-type M-specific polypeptide Mc (181 aa).

A DNA-binding region (HMG box) is located at residues 103 to 171 (TPRPPNAFIL…QHQKMYPGYK (69 aa)).

It is found in the nucleus. Its subcellular location is the cytoplasm. The protein localises to the cytoskeleton. It localises to the microtubule organizing center. The protein resides in the spindle pole body. Functionally, mating type proteins are sequence specific DNA-binding proteins that act as master switches in yeast differentiation by controlling gene expression in a cell type-specific fashion. Positive regulator of MFM genes. The HMG box recognizes the DNA sequence 5'-AACAAAG-3'. Required for conjugation and efficient meiosis. This chain is Mating-type M-specific polypeptide Mc (mat3-Mc), found in Schizosaccharomyces pombe (Fission yeast).